A 350-amino-acid chain; its full sequence is Biotin synthase (350 aa).

Positions asparagine 38–glutamate 256 constitute a Radical SAM core domain. Residues cysteine 53, cysteine 57, and cysteine 60 each coordinate [4Fe-4S] cluster. The [2Fe-2S] cluster site is built by cysteine 97, cysteine 128, cysteine 188, and arginine 260.

The protein belongs to the radical SAM superfamily. Biotin synthase family. As to quaternary structure, homodimer. It depends on [4Fe-4S] cluster as a cofactor. [2Fe-2S] cluster is required as a cofactor.

The catalysed reaction is (4R,5S)-dethiobiotin + (sulfur carrier)-SH + 2 reduced [2Fe-2S]-[ferredoxin] + 2 S-adenosyl-L-methionine = (sulfur carrier)-H + biotin + 2 5'-deoxyadenosine + 2 L-methionine + 2 oxidized [2Fe-2S]-[ferredoxin]. It participates in cofactor biosynthesis; biotin biosynthesis; biotin from 7,8-diaminononanoate: step 2/2. Functionally, catalyzes the conversion of dethiobiotin (DTB) to biotin by the insertion of a sulfur atom into dethiobiotin via a radical-based mechanism. The protein is Biotin synthase of Aliivibrio fischeri (strain ATCC 700601 / ES114) (Vibrio fischeri).